Reading from the N-terminus, the 128-residue chain is Aspartate 1-decarboxylase (128 aa).

Ser25 functions as the Schiff-base intermediate with substrate; via pyruvic acid in the catalytic mechanism. Residue Ser25 is modified to Pyruvic acid (Ser). Thr57 lines the substrate pocket. The Proton donor role is filled by Tyr58. 73–75 (GSA) provides a ligand contact to substrate.

It belongs to the PanD family. As to quaternary structure, heterooctamer of four alpha and four beta subunits. Requires pyruvate as cofactor. Post-translationally, is synthesized initially as an inactive proenzyme, which is activated by self-cleavage at a specific serine bond to produce a beta-subunit with a hydroxyl group at its C-terminus and an alpha-subunit with a pyruvoyl group at its N-terminus.

The protein resides in the cytoplasm. The enzyme catalyses L-aspartate + H(+) = beta-alanine + CO2. The protein operates within cofactor biosynthesis; (R)-pantothenate biosynthesis; beta-alanine from L-aspartate: step 1/1. In terms of biological role, catalyzes the pyruvoyl-dependent decarboxylation of aspartate to produce beta-alanine. The sequence is that of Aspartate 1-decarboxylase from Paraburkholderia phymatum (strain DSM 17167 / CIP 108236 / LMG 21445 / STM815) (Burkholderia phymatum).